The following is a 543-amino-acid chain: Chaperonin GroEL (543 aa).

Residues Thr-29–Pro-32, Asp-86–Thr-90, Gly-413, Asn-476–Ala-478, and Asp-492 each bind ATP.

This sequence belongs to the chaperonin (HSP60) family. In terms of assembly, forms a cylinder of 14 subunits composed of two heptameric rings stacked back-to-back. Interacts with the co-chaperonin GroES.

It is found in the cytoplasm. It catalyses the reaction ATP + H2O + a folded polypeptide = ADP + phosphate + an unfolded polypeptide.. Together with its co-chaperonin GroES, plays an essential role in assisting protein folding. The GroEL-GroES system forms a nano-cage that allows encapsulation of the non-native substrate proteins and provides a physical environment optimized to promote and accelerate protein folding. The polypeptide is Chaperonin GroEL (Brevibacillus choshinensis).